The sequence spans 555 residues: Oligo-1,6-glucosidase (555 aa).

Aspartate 199 serves as the catalytic Nucleophile. The Proton donor role is filled by glutamate 255.

It belongs to the glycosyl hydrolase 13 family.

The protein resides in the cytoplasm. The catalysed reaction is Hydrolysis of (1-&gt;6)-alpha-D-glucosidic linkages in some oligosaccharides produced from starch and glycogen by alpha-amylase, and in isomaltose.. The polypeptide is Oligo-1,6-glucosidase (malL) (Heyndrickxia coagulans (Weizmannia coagulans)).